We begin with the raw amino-acid sequence, 637 residues long: Sodium-dependent proline transporter (637 aa).

Over 1–45 the chain is Cytoplasmic; sequence MKKLQEAHLRKPITPDLLMTPSDQGDVDLDVDFAADRGNWTGKLD. Phosphothreonine is present on Thr20. Ser22 is subject to Phosphoserine. 3 helical membrane-spanning segments follow: residues 46–66, 74–93, and 117–137; these read FLLS…FPYR, AFLV…LFFL, and GAGA…NMII. At 138 to 214 the chain is on the extracellular side; the sequence is AYVLFYLFAS…QGIGRPGEIR (77 aa). Asn182 carries an N-linked (GlcNAc...) asparagine glycan. 9 consecutive transmembrane segments (helical) span residues 215–233, 242–259, 295–312, 324–345, 378–397, 425–443, 459–479, 500–519, and 538–556; these read WNLC…LCIL, VVYF…MLLV, IFYS…FASY, FIVT…FSVL, LPLS…TLGL, VFSG…ILTT, SFGL…VYGI, ACWL…YSIV, and LGIL…GMLV. At 557-637 the chain is on the cytoplasmic side; it reads AVLREEGSLW…IAEEEEESMM (81 aa). Ser573 and Ser582 each carry phosphoserine. Thr588 bears the Phosphothreonine mark. Tyr591 carries the phosphotyrosine modification. Ser598 and Ser600 each carry phosphoserine.

It belongs to the sodium:neurotransmitter symporter (SNF) (TC 2.A.22) family. SLC6A7 subfamily.

Its subcellular location is the synaptic cell membrane. The catalysed reaction is L-proline(out) + chloride(out) + 2 Na(+)(out) = L-proline(in) + chloride(in) + 2 Na(+)(in). It catalyses the reaction L-pipecolate(out) + chloride(out) + 2 Na(+)(out) = L-pipecolate(in) + chloride(in) + 2 Na(+)(in). Its function is as follows. Brain specific sodium (and chloride)-dependent proline transporter. Terminates the action of proline by its high affinity sodium-dependent reuptake into presynaptic terminals. The chain is Sodium-dependent proline transporter from Mus musculus (Mouse).